We begin with the raw amino-acid sequence, 295 residues long: Small ribosomal subunit biogenesis GTPase RsgA (295 aa).

A CP-type G domain is found at 68-228 (KNLLTKPHVA…VVDTPGFANL (161 aa)). Residues 117–120 (NKMD) and 170–178 (GLSGVGKSS) each bind GTP. Zn(2+) contacts are provided by C250, C255, H257, and C263.

This sequence belongs to the TRAFAC class YlqF/YawG GTPase family. RsgA subfamily. Monomer. Associates with 30S ribosomal subunit, binds 16S rRNA. The cofactor is Zn(2+).

It is found in the cytoplasm. Functionally, one of several proteins that assist in the late maturation steps of the functional core of the 30S ribosomal subunit. Helps release RbfA from mature subunits. May play a role in the assembly of ribosomal proteins into the subunit. Circularly permuted GTPase that catalyzes slow GTP hydrolysis, GTPase activity is stimulated by the 30S ribosomal subunit. The chain is Small ribosomal subunit biogenesis GTPase RsgA from Thermotoga maritima (strain ATCC 43589 / DSM 3109 / JCM 10099 / NBRC 100826 / MSB8).